The primary structure comprises 195 residues: MAVENEGVLLVLSSPSGAGKTTILERLLERSTNLVRSVSMTTRKPRPGEINGKDYFFVTKKEFHELCEAGQMLEYARVFENFYGIPKSFIEQNLSSGISVLLSIDWQGAFHLFELMREKVISVFILPPSMEELRLRLQKRNSDSASEIEHRLAEAQKEMSKRDKYDYVVINDDIDKSVEEISSILDKERLKRSGV.

Residues 7–186 (GVLLVLSSPS…SVEEISSILD (180 aa)) enclose the Guanylate kinase-like domain. 14 to 21 (SPSGAGKT) serves as a coordination point for ATP.

Belongs to the guanylate kinase family.

It is found in the cytoplasm. It catalyses the reaction GMP + ATP = GDP + ADP. Essential for recycling GMP and indirectly, cGMP. The polypeptide is Guanylate kinase (Wolbachia sp. subsp. Brugia malayi (strain TRS)).